Consider the following 210-residue polypeptide: Proteasome subunit beta (210 aa).

Positions 1-9 (MIHDKVFKG) are cleaved as a propeptide — removed in mature form; by autocatalysis. The Nucleophile role is filled by Thr-10.

The protein belongs to the peptidase T1B family. The 20S proteasome core is composed of 14 alpha and 14 beta subunits that assemble into four stacked heptameric rings, resulting in a barrel-shaped structure. The two inner rings, each composed of seven catalytic beta subunits, are sandwiched by two outer rings, each composed of seven alpha subunits. The catalytic chamber with the active sites is on the inside of the barrel. Has a gated structure, the ends of the cylinder being occluded by the N-termini of the alpha-subunits. Is capped at one or both ends by the proteasome regulatory ATPase, PAN.

It localises to the cytoplasm. The enzyme catalyses Cleavage of peptide bonds with very broad specificity.. Its activity is regulated as follows. The formation of the proteasomal ATPase PAN-20S proteasome complex, via the docking of the C-termini of PAN into the intersubunit pockets in the alpha-rings, triggers opening of the gate for substrate entry. Interconversion between the open-gate and close-gate conformations leads to a dynamic regulation of the 20S proteasome proteolysis activity. In terms of biological role, component of the proteasome core, a large protease complex with broad specificity involved in protein degradation. This chain is Proteasome subunit beta, found in Ferroglobus placidus (strain DSM 10642 / AEDII12DO).